We begin with the raw amino-acid sequence, 465 residues long: Glutamate--tRNA ligase (465 aa).

Positions 11–21 match the 'HIGH' region motif; the sequence is PSPTGFIHLGN. The short motif at 243–247 is the 'KMSKS' region element; the sequence is KMSKR. Lys-246 lines the ATP pocket.

This sequence belongs to the class-I aminoacyl-tRNA synthetase family. Glutamate--tRNA ligase type 1 subfamily. As to quaternary structure, monomer.

It is found in the cytoplasm. The enzyme catalyses tRNA(Glu) + L-glutamate + ATP = L-glutamyl-tRNA(Glu) + AMP + diphosphate. Functionally, catalyzes the attachment of glutamate to tRNA(Glu) in a two-step reaction: glutamate is first activated by ATP to form Glu-AMP and then transferred to the acceptor end of tRNA(Glu). This Cupriavidus metallidurans (strain ATCC 43123 / DSM 2839 / NBRC 102507 / CH34) (Ralstonia metallidurans) protein is Glutamate--tRNA ligase.